A 304-amino-acid polypeptide reads, in one-letter code: Putative S-adenosyl-L-methionine-dependent methyltransferase MUL_0816 (304 aa).

Residues aspartate 130 and 159 to 160 each bind S-adenosyl-L-methionine; that span reads DL.

This sequence belongs to the UPF0677 family.

Functionally, exhibits S-adenosyl-L-methionine-dependent methyltransferase activity. In Mycobacterium ulcerans (strain Agy99), this protein is Putative S-adenosyl-L-methionine-dependent methyltransferase MUL_0816.